Here is a 322-residue protein sequence, read N- to C-terminus: Probable heme-iron transport system permease protein IsdF (322 aa).

9 helical membrane passes run leucine 9 to glycine 29, isoleucine 61 to alanine 81, alanine 89 to isoleucine 109, phenylalanine 114 to leucine 134, valine 143 to leucine 163, isoleucine 179 to leucine 199, valine 233 to valine 253, valine 267 to glycine 287, and leucine 294 to isoleucine 314.

Belongs to the binding-protein-dependent transport system permease family. FecCD subfamily.

Its subcellular location is the cell membrane. Functionally, part of the binding-protein-dependent transport system for heme-iron. Responsible for the translocation of the substrate across the membrane. The polypeptide is Probable heme-iron transport system permease protein IsdF (isdF) (Staphylococcus aureus (strain bovine RF122 / ET3-1)).